A 456-amino-acid chain; its full sequence is O-phospho-L-seryl-tRNA:Cys-tRNA synthase 2 (456 aa).

Residues 146 to 147 (AR), N251, and 274 to 276 (SGH) contribute to the pyridoxal 5'-phosphate site. K277 carries the post-translational modification N6-(pyridoxal phosphate)lysine.

The protein belongs to the SepCysS family. In terms of assembly, homodimer. Interacts with SepRS. Pyridoxal 5'-phosphate serves as cofactor.

The enzyme catalyses O-phospho-L-seryl-tRNA(Cys) + hydrogen sulfide + H(+) = L-cysteinyl-tRNA(Cys) + phosphate. Functionally, converts O-phospho-L-seryl-tRNA(Cys) (Sep-tRNA(Cys)) to L-cysteinyl-tRNA(Cys) (Cys-tRNA(Cys)). The chain is O-phospho-L-seryl-tRNA:Cys-tRNA synthase 2 from Methanospirillum hungatei JF-1 (strain ATCC 27890 / DSM 864 / NBRC 100397 / JF-1).